The primary structure comprises 118 residues: Large ribosomal subunit protein bL17 (118 aa).

This sequence belongs to the bacterial ribosomal protein bL17 family. Part of the 50S ribosomal subunit. Contacts protein L32.

In Campylobacter hominis (strain ATCC BAA-381 / DSM 21671 / CCUG 45161 / LMG 19568 / NCTC 13146 / CH001A), this protein is Large ribosomal subunit protein bL17.